The chain runs to 411 residues: Probable indole-3-pyruvate monooxygenase YUCCA4 (411 aa).

21–26 (GAGPSG) lines the FAD pocket. An NADP(+)-binding site is contributed by 183–188 (GCGNSG).

The protein belongs to the FMO family. Requires FAD as cofactor. As to expression, expressed in leaves, stems, flowers, buds and siliques. Detected in the apical gynoecium and in the developing ovules.

It is found in the cytoplasm. Its subcellular location is the endoplasmic reticulum membrane. It catalyses the reaction indole-3-pyruvate + NADPH + O2 + H(+) = (indol-3-yl)acetate + CO2 + NADP(+) + H2O. The protein operates within plant hormone metabolism; auxin biosynthesis. Functionally, involved in auxin biosynthesis. Both isoforms are catalitically active. Involved during embryogenesis and seedling development. Required for the formation of floral organs and vascular tissues. Belongs to the set of redundant YUCCA genes probably responsible for auxin biosynthesis in shoots. The sequence is that of Probable indole-3-pyruvate monooxygenase YUCCA4 (YUC4) from Arabidopsis thaliana (Mouse-ear cress).